Reading from the N-terminus, the 201-residue chain is Large ribosomal subunit protein uL4 (201 aa).

A disordered region spans residues 43-73 (SRGQKTRAEVTGSGKKPWRQKGTGRARSGSV).

It belongs to the universal ribosomal protein uL4 family. As to quaternary structure, part of the 50S ribosomal subunit.

One of the primary rRNA binding proteins, this protein initially binds near the 5'-end of the 23S rRNA. It is important during the early stages of 50S assembly. It makes multiple contacts with different domains of the 23S rRNA in the assembled 50S subunit and ribosome. In terms of biological role, forms part of the polypeptide exit tunnel. The sequence is that of Large ribosomal subunit protein uL4 from Sodalis glossinidius (strain morsitans).